Consider the following 495-residue polypeptide: Meiosis-specific nuclear structural protein 1 (495 aa).

Residues 1–314 are interaction with BBOF1; it reads MGSKRRNLSC…KLEEMLRQRE (314 aa). A coiled-coil region spans residues 28-410; it reads VQALKNVNSQ…QLEHRRAVEK (383 aa). Tyr188 is subject to Phosphotyrosine.

This sequence belongs to the MNS1 family. In terms of assembly, able to form oligomers. Microtubule inner protein component of sperm flagellar doublet microtubules. Interacts with ODAD1. Interacts with BBOF1. In terms of tissue distribution, expressed in nasal respiratory epithelium and in the sperm.

Its subcellular location is the nucleus. The protein localises to the cytoplasm. The protein resides in the cytoskeleton. It localises to the cilium axoneme. It is found in the flagellum axoneme. Functionally, microtubule inner protein (MIP) part of the dynein-decorated doublet microtubules (DMTs) in cilia axoneme, which is required for motile cilia beating. May play a role in the control of meiotic division and germ cell differentiation through regulation of pairing and recombination during meiosis. Required for sperm flagella assembly. May play a role in the assembly and function of the outer dynein arm-docking complex (ODA-DC). ODA-DC mediates outer dynein arms (ODA) binding onto the axonemal doublet microtubules. This Homo sapiens (Human) protein is Meiosis-specific nuclear structural protein 1.